The primary structure comprises 72 residues: Pre-histone-like nucleoprotein (72 aa).

Ser2 carries the N-acetylserine; by host modification. The propeptide occupies 2–14 (SILISPSDNRGWG).

The protein belongs to the adenoviridae histone-like nucleoprotein family. Interacts with the core-capsid bridging protein; this interaction bridges the virus core to the capsid. Cleaved near the N-terminus by the viral protease during virion maturation to form the mature protein.

It localises to the host nucleus. Its subcellular location is the host nucleolus. The protein localises to the virion. Strongly bound to viral DNA and responsible for wrapping and condensing the viral DNA. Probably promotes viral genome import into the nucleus and is still associated with the viral DNA when the latter enters into the host nucleus. The chain is Pre-histone-like nucleoprotein from Galliformes (FAdV-1).